The primary structure comprises 1319 residues: ERAD-associated E3 ubiquitin-protein ligase DOA10 (1319 aa).

Position 1 is an N-acetylmethionine (Met1). The Cytoplasmic segment spans residues Met1–Ala131. An RING-CH-type zinc finger spans residues Asp31 to Lys100. Zn(2+) contacts are provided by Cys39, Cys42, Cys56, Cys58, His66, Cys69, Cys90, and Cys93. Residues Leu132–Phe152 form a helical membrane-spanning segment. At Gly153 to Ser203 the chain is on the lumenal side. A helical membrane pass occupies residues Leu204–Val224. Residues Arg225 to Lys468 are Cytoplasmic-facing. The span at Ala291–Pro306 shows a compositional bias: low complexity. Disordered regions lie at residues Ala291 to Asn315 and Glu329 to Tyr381. Residues Leu469–Ile489 form a helical membrane-spanning segment. Over Ser490–Tyr491 the chain is Lumenal. A helical membrane pass occupies residues Leu492–Ile512. Topologically, residues Leu513–Val626 are cytoplasmic. The chain crosses the membrane as a helical span at residues Phe627 to Phe647. Topologically, residues Ser648–Met660 are lumenal. The chain crosses the membrane as a helical span at residues Leu661–Ile681. At Gly682–Met739 the chain is on the cytoplasmic side. The helical transmembrane segment at Phe740 to Phe760 threads the bilayer. Residues Met761–Ser777 lie on the Lumenal side of the membrane. Residues Ile778–Leu797 traverse the membrane as a helical segment. Topologically, residues Glu798–Tyr965 are cytoplasmic. Residues Met966–Ile986 form a helical membrane-spanning segment. Over Ser987–Glu1019 the chain is Lumenal. A helical transmembrane segment spans residues Leu1020–Leu1040. Topologically, residues Ser1041 to Asn1113 are cytoplasmic. The helical transmembrane segment at Leu1114 to Leu1134 threads the bilayer. Over Thr1135–Ser1168 the chain is Lumenal. The chain crosses the membrane as a helical span at residues Leu1169 to Leu1189. Residues Lys1190 to Lys1213 lie on the Cytoplasmic side of the membrane. The helical transmembrane segment at Gln1214–Leu1234 threads the bilayer. The Lumenal segment spans residues Arg1235–Tyr1270. A helical membrane pass occupies residues Phe1271 to Ile1291. Topologically, residues Gln1292–Ser1319 are cytoplasmic.

It belongs to the DOA10/MARCH6 family. As to quaternary structure, component of the DOA10 ubiquitin ligase complex which contains E3 ligase SSM4/DOA10 and CDC48-binding protein UBX2/SEL1. The DOA10 complex interacts with the heterotrimeric CDC48-NPL4-UFD1 ATPase complex which is recruited by UBX2/SEL1 via its interaction with CDC48. Interacts with its associated ubiquitin conjugating enzymes UBC6 and UBC7 with its membrane anchor CUE1. Interacts with PEX29.

Its subcellular location is the endoplasmic reticulum membrane. The protein localises to the nucleus inner membrane. The enzyme catalyses S-ubiquitinyl-[E2 ubiquitin-conjugating enzyme]-L-cysteine + [acceptor protein]-L-lysine = [E2 ubiquitin-conjugating enzyme]-L-cysteine + N(6)-ubiquitinyl-[acceptor protein]-L-lysine.. It functions in the pathway protein modification; protein ubiquitination. Functionally, E3 ubiquitin-protein ligase which accepts ubiquitin specifically from endoplasmic reticulum-associated UBC6 and UBC7 E2 ligases, and transfers it to substrates promoting their degradation. Mediates the degradation of a broad range of substrates, including endoplasmic reticulum membrane proteins (ERQC), soluble nuclear proteins and soluble cytoplasmic proteins (CytoQC). Component of the DOA10 ubiquitin ligase complex, which is part of the ERAD-C pathway responsible for the rapid degradation of membrane proteins with misfolded cytoplasmic domains. ERAD-C substrates are ubiquitinated through DOA10 in conjunction with the E2 ubiquitin-conjugating enzymes UBC6 and UBC7-CUE1. Ubiquitinated substrates are then removed to the cytosol via the action of the UFD1-NPL4-CDC48/p97 (UNC) AAA ATPase complex and targeted to the proteasome. Also recognizes the N-terminally acetylated residue of proteins as degradation signal (degron). N-terminally acetylated target proteins include MATALPHA2, TBF1, SLK19, YMR090W, HIS3, HSP104, UBP6 and ARO8. Catalyzes ubiquitination of mislocalized tail-anchored proteins that are extracted from the mitochondrion membrane by MSP1: following extraction, mistargeted proteins are transferred to the endoplasmic reticulum, where they are ubiquitinated by DOA10 and degraded by the proteasome. This is ERAD-associated E3 ubiquitin-protein ligase DOA10 (SSM4) from Saccharomyces cerevisiae (strain ATCC 204508 / S288c) (Baker's yeast).